The primary structure comprises 215 residues: Adenylate kinase (215 aa).

An ATP-binding site is contributed by Gly10–Thr15. The interval Ser30–Val59 is NMP. AMP-binding positions include Thr31, Arg36, Asp57–Val59, Gly85–Arg88, and Gln92. The segment at Gly126–Asp163 is LID. Arg127 is a binding site for ATP. Cys130 and Cys133 together coordinate Zn(2+). Position 136–137 (Thr136–Tyr137) interacts with ATP. Cys150 and Asp153 together coordinate Zn(2+). Residues Arg160 and Arg171 each coordinate AMP. Gln199 provides a ligand contact to ATP.

Belongs to the adenylate kinase family. In terms of assembly, monomer.

The protein localises to the cytoplasm. The enzyme catalyses AMP + ATP = 2 ADP. The protein operates within purine metabolism; AMP biosynthesis via salvage pathway; AMP from ADP: step 1/1. Catalyzes the reversible transfer of the terminal phosphate group between ATP and AMP. Plays an important role in cellular energy homeostasis and in adenine nucleotide metabolism. This Listeria monocytogenes serotype 4a (strain HCC23) protein is Adenylate kinase.